We begin with the raw amino-acid sequence, 194 residues long: Lectin-C (194 aa).

An N-terminal signal peptide occupies residues 1-26 (MKRSNSIAVMLVLVLSSLMLLLPVEG). The propeptide at 27-44 (QGHEGHGVGEILLMGKLG) is removed in mature form. 3 Chitin-binding type-1 domains span residues 45–86 (APVC…QCDY), 87–127 (NRCG…QCSY), and 128–168 (WRCG…QCDL). Cystine bridges form between cysteine 48-cysteine 63, cysteine 57-cysteine 69, cysteine 62-cysteine 76, cysteine 80-cysteine 84, cysteine 89-cysteine 104, cysteine 98-cysteine 110, cysteine 103-cysteine 117, cysteine 121-cysteine 125, cysteine 130-cysteine 145, cysteine 139-cysteine 151, cysteine 144-cysteine 158, and cysteine 162-cysteine 166. Positions 171–194 (LLPSPLRRIIAIRKLKANLANMLS) are cleaved as a propeptide — removed in mature form.

Homodimer. The homodimers are asymmetric; formed in a 'head-to-tail' fashion via hydrophobic interactions between aromatic residues of the carbohydrate-binding sites of each subunit.

In terms of biological role, N-acetyl-D-glucosamine binding lectin. Almost no hemagglutinating activity towards human erythrocytes. Low mitogenic activity towards human peripheral blood lymphocytes. The polypeptide is Lectin-C (Phytolacca americana (American pokeweed)).